Consider the following 342-residue polypeptide: MKSLVLLLLVAVTVSSVVSKPLPEDSEAEVHKEFETWKVKYGKSYPSTEEEAKRKEMWLATRKRVMEHNTRAGNGLESYTMAVNHFADLTTEEVPKGLLPMPRPEEEEVDKEFEMWKTVNGKTYNSTEEEARRKEIWLATRARVMEHNKRAENGSESFTMGINYFSDMTFEEVPKGRLMVVFPTRDGGEEAEVDKEFEMWKVQHGKSYGSTEEEAKRKEIWLATRTRVMEHNKRAETGLESFTMGMNHLSDKTTAEVTGQRLQDREEAEVHKEFETWKVKYGKTYPSTEEEAKRKEIWLATRKMVTEHNKRAENGQESFTMAVNHFADLTTEEVPKGLLPME.

A signal peptide spans 1–19 (MKSLVLLLLVAVTVSSVVS). An N-linked (GlcNAc) asparagine glycan is attached at Asn153. The O-linked (GlcNAc) threonine glycan is linked to Thr184.

Post-translationally, N-glycosylated, with sialylated biantennary complex-type glycans. O-glycosylated, with sialylated oligosaccharides.

Its subcellular location is the cytoplasm. It localises to the vacuole. Its function is as follows. Inhibits papain and ficin (cysteine proteinases) but not trypsin (a serine proteinase). The protein is Cystein proteinase inhibitor protein salarin (salarin) of Salvelinus alpinus (Arctic char).